The following is an 895-amino-acid chain: Pyruvate dehydrogenase E1 component (895 aa).

Positions 1–20 (MSAVPEQILGASSANDADPQ) are disordered.

In terms of assembly, homodimer. Part of the PDH complex, consisting of multiple copies of pyruvate dehydrogenase (E1), dihydrolipoamide acetyltransferase (E2) and lipoamide dehydrogenase (E3). The cofactor is thiamine diphosphate.

It catalyses the reaction N(6)-[(R)-lipoyl]-L-lysyl-[protein] + pyruvate + H(+) = N(6)-[(R)-S(8)-acetyldihydrolipoyl]-L-lysyl-[protein] + CO2. In terms of biological role, component of the pyruvate dehydrogenase (PDH) complex, that catalyzes the overall conversion of pyruvate to acetyl-CoA and CO(2). The sequence is that of Pyruvate dehydrogenase E1 component (pdhA) from Cupriavidus necator (strain ATCC 17699 / DSM 428 / KCTC 22496 / NCIMB 10442 / H16 / Stanier 337) (Ralstonia eutropha).